Here is a 319-residue protein sequence, read N- to C-terminus: Very-long-chain 3-oxoacyl-CoA reductase-A (319 aa).

Residues 17–37 (LFWVGALITASLALYVVYKTI) form a helical membrane-spanning segment. Residue 56–85 (GKWAVVTGATDGIGKSYAEELARRGFSMML) participates in NADP(+) binding. The next 2 membrane-spanning stretches (helical) occupy residues 188–208 (GVIL…LTIY) and 282–302 (AVMG…NLGL). Ser-195 provides a ligand contact to substrate. Tyr-208 functions as the Proton acceptor in the catalytic mechanism.

Belongs to the short-chain dehydrogenases/reductases (SDR) family. 17-beta-HSD 3 subfamily.

It is found in the endoplasmic reticulum membrane. It catalyses the reaction a very-long-chain (3R)-3-hydroxyacyl-CoA + NADP(+) = a very-long-chain 3-oxoacyl-CoA + NADPH + H(+). The enzyme catalyses 17beta-estradiol + NAD(+) = estrone + NADH + H(+). It carries out the reaction 17beta-estradiol + NADP(+) = estrone + NADPH + H(+). Its pathway is lipid metabolism; fatty acid biosynthesis. It participates in steroid biosynthesis; estrogen biosynthesis. In terms of biological role, catalyzes the second of the four reactions of the long-chain fatty acids elongation cycle. This endoplasmic reticulum-bound enzymatic process, allows the addition of two carbons to the chain of long- and very long-chain fatty acids/VLCFAs per cycle. This enzyme has a 3-ketoacyl-CoA reductase activity, reducing 3-ketoacyl-CoA to 3-hydroxyacyl-CoA, within each cycle of fatty acid elongation. Thereby, it may participate in the production of VLCFAs of different chain lengths that are involved in multiple biological processes as precursors of membrane lipids and lipid mediators. May also catalyze the transformation of estrone (E1) into estradiol (E2) and play a role in estrogen formation. This is Very-long-chain 3-oxoacyl-CoA reductase-A (hsd17b12a) from Danio rerio (Zebrafish).